The primary structure comprises 846 residues: Protein kintoun (846 aa).

4 disordered regions span residues 1 to 21 (MSTA…ERAD), 377 to 412 (DSGV…PPDP), 581 to 657 (HTSI…DSTI), and 743 to 846 (HDSS…DDEI). The residue at position 378 (S378) is a Phosphoserine. The span at 399–408 (PETPELETAA) shows a compositional bias: low complexity. 2 stretches are compositionally biased toward basic residues: residues 596–612 (LHKK…KKQR) and 750–766 (QRKK…RAQQ). S770 is modified (phosphoserine). Basic and acidic residues predominate over residues 821–832 (TRQDHADADAKN).

This sequence belongs to the PIH1 family. Kintoun subfamily. As to quaternary structure, interacts with Pp1alpha-96A, Pp1-87B, Pp1-13C and flw.

The protein localises to the cytoplasm. Functionally, required for cytoplasmic pre-assembly of axonemal dyneins, thereby playing a central role in motility in cilia and flagella. Involved in pre-assembly of dynein arm complexes in the cytoplasm before intraflagellar transport loads them for the ciliary compartment. The protein is Protein kintoun of Drosophila pseudoobscura pseudoobscura (Fruit fly).